The chain runs to 272 residues: D-aminoacyl-tRNA deacylase (272 aa).

The protein belongs to the DtdA deacylase family. In terms of assembly, monomer. The cofactor is Zn(2+).

The catalysed reaction is a D-aminoacyl-tRNA + H2O = a tRNA + a D-alpha-amino acid + H(+). The enzyme catalyses glycyl-tRNA(Ala) + H2O = tRNA(Ala) + glycine + H(+). Its function is as follows. D-aminoacyl-tRNA deacylase with broad substrate specificity. By recycling D-aminoacyl-tRNA to D-amino acids and free tRNA molecules, this enzyme counteracts the toxicity associated with the formation of D-aminoacyl-tRNA entities in vivo. This Thermococcus onnurineus (strain NA1) protein is D-aminoacyl-tRNA deacylase.